Consider the following 263-residue polypeptide: MAAAAARVWCRGLLGAASVGRGAGRPSVLWQHVRRESAAADKRPTVRPRSDVTHKQLSAFGEYVAEILPKYVQQVQVSCLDELEICIHPDGVIPTLTFLRDHTNAQFKSLADLTAVDVPTRQNRFEIVYNLLSLRFNSRIRVKTYADELTPIDSIVSVHIAANWYEREVWDMFGVFFFNHPDLRRILTDYGFEGHPFRKDFPLTGYVELRYDDEVKRVVAEPVELAQEFRKFDLNSPWEAFPAYRQPPESLKLEAGDKKPETK.

The transit peptide at 1–35 (MAAAAARVWCRGLLGAASVGRGAGRPSVLWQHVRR) directs the protein to the mitochondrion.

Belongs to the complex I 30 kDa subunit family. Core subunit of respiratory chain NADH dehydrogenase (Complex I) which is composed of 45 different subunits. Interacts with NDUFAF3. Interacts with RAB5IF. Found in subcomplexes containing subunits NDUFS2, MT-ND1 and NDUFA13.

The protein resides in the mitochondrion inner membrane. The catalysed reaction is a ubiquinone + NADH + 5 H(+)(in) = a ubiquinol + NAD(+) + 4 H(+)(out). Core subunit of the mitochondrial membrane respiratory chain NADH dehydrogenase (Complex I) which catalyzes electron transfer from NADH through the respiratory chain, using ubiquinone as an electron acceptor. Essential for the catalytic activity and assembly of complex I. This chain is NADH dehydrogenase [ubiquinone] iron-sulfur protein 3, mitochondrial (Ndufs3), found in Mus musculus (Mouse).